The primary structure comprises 176 residues: Trypsin inhibitor 1B (176 aa).

2 disulfide bridges follow: Cys39–Cys83 and Cys132–Cys143.

It belongs to the protease inhibitor I3 (leguminous Kunitz-type inhibitor) family.

Functionally, inhibits trypsin stoichiometrically. This is Trypsin inhibitor 1B from Erythrina variegata (Indian coral tree).